Reading from the N-terminus, the 359-residue chain is Gap junction alpha-5 protein (359 aa).

Residues 1–19 (MGDWSFLGEFLEEVHKHST) are Cytoplasmic-facing. Residues 20 to 40 (VIGKVWLTVLFIFRMLVLGTA) form a helical membrane-spanning segment. The Extracellular segment spans residues 41 to 76 (AESSWGDEQADFLCDTMQPGCENVCYDQAFPISHIR). The chain crosses the membrane as a helical span at residues 77–97 (YWVLQVIFVSTPSLVYLGHAV). At 98–165 (HMVRVQEKRK…CSILIRTTME (68 aa)) the chain is on the cytoplasmic side. A helical transmembrane segment spans residues 166–186 (VAFIVGQYLLYGVFLDTLHVC). Residues 187–206 (RRSPCPHPVNCYVSRPTEKN) are Extracellular-facing. Residues 207–227 (VFIVFMLAVAGLSLFLSLAEL) traverse the membrane as a helical segment. Over 228–359 (YHLGWKKIRQ…SKARSDDLSV (132 aa)) the chain is Cytoplasmic. Disordered regions lie at residues 285 to 305 (SNKM…VRSQ) and 317 to 359 (RYAQ…DLSV). Phosphoserine occurs at positions 354 and 358.

The protein belongs to the connexin family. Alpha-type (group II) subfamily. As to quaternary structure, a connexon is composed of a hexamer of connexins.

Its subcellular location is the cell membrane. The protein resides in the cell junction. The protein localises to the gap junction. Functionally, one gap junction consists of a cluster of closely packed pairs of transmembrane channels, the connexons, through which materials of low MW diffuse from one cell to a neighboring cell. The polypeptide is Gap junction alpha-5 protein (GJA5) (Bos taurus (Bovine)).